The following is a 127-amino-acid chain: Aspartate 1-decarboxylase (127 aa).

Ser-25 functions as the Schiff-base intermediate with substrate; via pyruvic acid in the catalytic mechanism. The residue at position 25 (Ser-25) is a Pyruvic acid (Ser). Position 57 (Thr-57) interacts with substrate. Tyr-58 acts as the Proton donor in catalysis. Position 73–75 (Gly-73–Ala-75) interacts with substrate.

The protein belongs to the PanD family. Heterooctamer of four alpha and four beta subunits. It depends on pyruvate as a cofactor. In terms of processing, is synthesized initially as an inactive proenzyme, which is activated by self-cleavage at a specific serine bond to produce a beta-subunit with a hydroxyl group at its C-terminus and an alpha-subunit with a pyruvoyl group at its N-terminus.

It is found in the cytoplasm. It carries out the reaction L-aspartate + H(+) = beta-alanine + CO2. It participates in cofactor biosynthesis; (R)-pantothenate biosynthesis; beta-alanine from L-aspartate: step 1/1. Catalyzes the pyruvoyl-dependent decarboxylation of aspartate to produce beta-alanine. The protein is Aspartate 1-decarboxylase of Trichormus variabilis (strain ATCC 29413 / PCC 7937) (Anabaena variabilis).